The chain runs to 904 residues: Toll-like receptor 3 (904 aa).

Residues 1–26 (MSRPLPYHIYFFTGLLTCWILCTSSA) form the signal peptide. An LRRNT domain is found at 27–52 (HKCTVRHEVADCSHLKLTQIPEDLPT). Residues 27 to 705 (HKCTVRHEVA…PCKDSAPFEL (679 aa)) lie on the Lumenal side of the membrane. An intrachain disulfide couples cysteine 29 to cysteine 38. Asparagine 53, asparagine 58, and asparagine 71 each carry an N-linked (GlcNAc...) asparagine glycan. LRR repeat units follow at residues 53–74 (NITV…NFTR), 77–98 (RLTI…LCQN), 101–122 (WLEI…TFVF), 125–146 (NLTE…PFKN), 149–170 (NLIK…TQLQ), and 173–196 (NLQE…DFLG). The cysteines at positions 96 and 123 are disulfide-linked. A glycan (N-linked (GlcNAc...) asparagine) is linked at asparagine 125. Asparagine 197 carries N-linked (GlcNAc...) asparagine glycosylation. LRR repeat units follow at residues 199 to 220 (SLER…CFHA) and 223 to 245 (KLSG…LCLE). Asparagine 248, asparagine 253, asparagine 276, and asparagine 292 each carry an N-linked (GlcNAc...) asparagine glycan. LRR repeat units follow at residues 250-271 (SIEN…TFSG), 276-297 (NLTT…SFAW), 300-321 (HLEY…SFYG), 324-345 (NLRH…TSLP), 357-378 (CLEY…TFTG), 381-401 (RLKF…TNET), 409-430 (PLLL…AFSW), 433-455 (HLEV…EWRG), 466-487 (YNKY…QRLM), 508-529 (NLVI…LLKG), 532-553 (KLEI…ANPG), 564-585 (HLRI…AFKD), 588-609 (ELKS…VFDN), and 612-633 (SLKS…VFGP). Residues asparagine 399 and asparagine 414 are each glycosylated (N-linked (GlcNAc...) asparagine). 3 N-linked (GlcNAc...) asparagine glycosylation sites follow: asparagine 637, asparagine 663, and asparagine 668. The LRRCT domain maps to 646–699 (NPFDCTCESIAWFVNWINSTHTNISELSNHYLCNTPPQYHGFPVMLFDVSPCKD). Intrachain disulfides connect cysteine 650–cysteine 678 and cysteine 652–cysteine 697. Residues 706–726 (LFMINTNILLIFIFIVLLIHF) traverse the membrane as a helical segment. Residues 727-904 (EGWRISFYWN…VALGSRNSAH (178 aa)) are Cytoplasmic-facing. In terms of domain architecture, TIR spans 754–897 (FEYAAYIIHA…AFHHKLKVAL (144 aa)). Phosphotyrosine is present on tyrosine 759. Glycyl lysine isopeptide (Lys-Gly) (interchain with G-Cter in ubiquitin) cross-links involve residues lysine 812 and lysine 831. Tyrosine 858 bears the Phosphotyrosine mark.

It belongs to the Toll-like receptor family. As to quaternary structure, monomer and homodimer; dimerization is triggered by ligand-binding and is required for TLR3 signaling. Interacts (via transmembrane domain) with UNC93B1. Interacts with TICAM1 (via the TIR domain) in response to poly(I:C) and this interaction is enhanced the presence of WDFY1. Interacts with SRC; upon binding of double-stranded RNA. The tyrosine-phosphorylated form (via TIR domain) interacts with WDFY1 (via WD repeat 2) in response to poly(I:C). Post-translationally, ubiquitinated by TRIM3; leading to recognition and sorting of polyubiquitinated TLR3 by the ESCRT complexes. Ubiquitinated by ZNRF1 via 'Lys-63'-linked ubiquitin chains; leading to TLR3 lysosomal trafficking and degradation.

The protein localises to the endoplasmic reticulum membrane. Its subcellular location is the endosome membrane. The protein resides in the early endosome. Functionally, key component of innate and adaptive immunity. TLRs (Toll-like receptors) control host immune response against pathogens through recognition of molecular patterns specific to microorganisms. TLR3 is a nucleotide-sensing TLR which is activated by double-stranded RNA, a sign of viral infection. Acts via the adapter TRIF/TICAM1, leading to NF-kappa-B activation, cytokine secretion and the inflammatory response. In Boselaphus tragocamelus (Nilgai), this protein is Toll-like receptor 3 (TLR3).